Here is a 298-residue protein sequence, read N- to C-terminus: Beta-soluble NSF attachment protein (298 aa).

The protein belongs to the SNAP family. Interacts with PRKCABP, and disrupts the interaction between GRIA2 and PRKCABP, leading to the internalization of GRIA2.

The protein localises to the membrane. Required for vesicular transport between the endoplasmic reticulum and the Golgi apparatus. This Homo sapiens (Human) protein is Beta-soluble NSF attachment protein (NAPB).